Here is a 106-residue protein sequence, read N- to C-terminus: Putative double-stranded DNA mimic protein VIBHAR_02752 (106 aa).

The protein belongs to the putative dsDNA mimic protein family.

Its function is as follows. May act as a double-stranded DNA (dsDNA) mimic. Probably regulates the activity of a dsDNA-binding protein. The chain is Putative double-stranded DNA mimic protein VIBHAR_02752 from Vibrio campbellii (strain ATCC BAA-1116).